A 333-amino-acid polypeptide reads, in one-letter code: Nucleoid-associated protein PSPPH_1145 (333 aa).

This sequence belongs to the YejK family.

It localises to the cytoplasm. Its subcellular location is the nucleoid. The protein is Nucleoid-associated protein PSPPH_1145 of Pseudomonas savastanoi pv. phaseolicola (strain 1448A / Race 6) (Pseudomonas syringae pv. phaseolicola (strain 1448A / Race 6)).